The sequence spans 311 residues: tRNA dimethylallyltransferase (311 aa).

11–18 is an ATP binding site; that stretch reads GPTAVGKT. 13-18 serves as a coordination point for substrate; it reads TAVGKT. The segment at 36 to 39 is interaction with substrate tRNA; sequence DSMQ.

This sequence belongs to the IPP transferase family. As to quaternary structure, monomer. Requires Mg(2+) as cofactor.

The enzyme catalyses adenosine(37) in tRNA + dimethylallyl diphosphate = N(6)-dimethylallyladenosine(37) in tRNA + diphosphate. In terms of biological role, catalyzes the transfer of a dimethylallyl group onto the adenine at position 37 in tRNAs that read codons beginning with uridine, leading to the formation of N6-(dimethylallyl)adenosine (i(6)A). This is tRNA dimethylallyltransferase from Clostridioides difficile (strain 630) (Peptoclostridium difficile).